A 562-amino-acid polypeptide reads, in one-letter code: Arginine--tRNA ligase (562 aa).

The short motif at 130–140 (ANPTGPLHIGH) is the 'HIGH' region element.

It belongs to the class-I aminoacyl-tRNA synthetase family. Monomer.

It is found in the cytoplasm. The catalysed reaction is tRNA(Arg) + L-arginine + ATP = L-arginyl-tRNA(Arg) + AMP + diphosphate. This is Arginine--tRNA ligase from Geobacter metallireducens (strain ATCC 53774 / DSM 7210 / GS-15).